The sequence spans 211 residues: Thymidylate kinase (211 aa).

Residue 11-18 (GPDGAGKT) participates in ATP binding.

It belongs to the thymidylate kinase family.

The catalysed reaction is dTMP + ATP = dTDP + ADP. In terms of biological role, phosphorylation of dTMP to form dTDP in both de novo and salvage pathways of dTTP synthesis. This Streptococcus pyogenes serotype M18 (strain MGAS8232) protein is Thymidylate kinase.